The chain runs to 519 residues: Cyclic AMP-responsive element-binding protein 3-like protein 1 (519 aa).

Positions 1-60 (MDAVLEPFPADRLFPGSSFLDLGDLNESDFLNNAHFPEHLDHFVENMEDFSNDLFSSFFD) are required for transcription activation. Over 1–376 (MDAVLEPFPA…MAATQTGTCL (376 aa)) the chain is Cytoplasmic. Residue lysine 184 forms a Glycyl lysine isopeptide (Lys-Gly) (interchain with G-Cter in SUMO2) linkage. The disordered stretch occupies residues 200 to 259 (DLVQMPPTPPSSHGSDSDGSQSPRSLPPSSPVRPMARSSTAISTSPLLTAPHKLQGTSGP). Residues 210–223 (SSHGSDSDGSQSPR) show a composition bias toward low complexity. Over residues 236–246 (RSSTAISTSPL) the composition is skewed to polar residues. Residues 290 to 353 (ALKRVRRKIK…RTLLQQLQKL (64 aa)) enclose the bZIP domain. Residues 292 to 321 (KRVRRKIKNKISAQESRRKKKEYVECLEKK) form a basic motif region. The tract at residues 332–353 (LWKKVETLETANRTLLQQLQKL) is leucine-zipper. The helical; Signal-anchor for type II membrane protein transmembrane segment at 377-397 (MVAALCFVLVLGSLVPCLPAF) threads the bilayer. An S2P recognition motif is present at residues 392–395 (PCLP). Over 398 to 519 (SSGSMTVKED…LGPNTTIKLS (122 aa)) the chain is Lumenal. The S1P recognition signature appears at 423-426 (RSLL). Positions 449 to 519 (EGWELKPGGP…LGPNTTIKLS (71 aa)) are disordered. A compositionally biased stretch (basic and acidic residues) spans 462 to 486 (RPQDHLRHDRADSIHETTKYLRETW). N-linked (GlcNAc...) asparagine glycosylation is found at asparagine 493, asparagine 498, and asparagine 513.

Belongs to the bZIP family. ATF subfamily. In terms of assembly, interacts with SMAD4, the interaction takes place upon TGFB1 induction and SMAD4 acts as a CREB3L1 coactivator to induce the expression of genes involved in assembly of collagen extracellular matrix. Post-translationally, N-glycosylated. In terms of processing, ubiquitinated by HRD1/SYVN1; undergoes 'Lys-48'-linked ubiquitination, followed by rapid proteasomal degradation under normal conditions. Upon ER stress, SYVN1 E3 ubiquitin-protein ligase dissociates from its substrate, ubiquitination does not occur and CREB3L1 is stabilized. Upon ER stress or DNA damage, translocated to the Golgi apparatus, where it is processed by regulated intramembrane proteolysis (RIP) to release the cytosol-facing N-terminal transcription factor domain. The cleavage is performed sequentially by site-1 and site-2 proteases (S1P/MBTPS1 and S2P/MBTPS2). RIP is induced by TGFB1 and ceramide. In terms of tissue distribution, expressed in cortical and trabecular bones. Highly expressed in osteoblasts, but not detected in osteoclasts, nor in macrophages. Expressed at relatively low levels in lung and kidney. Weakly expressed in brain and spleen. Expressed in astrocytes.

It localises to the endoplasmic reticulum membrane. The protein resides in the nucleus. Its function is as follows. Precursor of the transcription factor form (Processed cyclic AMP-responsive element-binding protein 3-like protein 1), which is embedded in the endoplasmic reticulum membrane with N-terminal DNA-binding and transcription activation domains oriented toward the cytosolic face of the membrane. In response to ER stress or DNA damage, transported to the Golgi, where it is cleaved in a site-specific manner by resident proteases S1P/MBTPS1 and S2P/MBTPS2. The released N-terminal cytosolic domain is translocated to the nucleus where it activates transcription of specific target genes involved in the cell-cycle progression inhibition. In terms of biological role, transcription factor involved in cell type specific DNA damage and unfolded protein response (UPR). Binds the DNA consensus sequence 5'-GTGXGCXGC-3'. Plays a critical role in bone formation through the transcription of COL1A1, and possibly COL1A2, and the secretion of bone matrix proteins. Directly binds to the UPR element (UPRE)-like sequence in an osteoblast-specific COL1A1 promoter region and induces its transcription. Does not regulate COL1A1 in other tissues, such as skin. Required to protect astrocytes from ER stress-induced cell death. In astrocytes, binds to the cAMP response element (CRE) of the BiP/HSPA5 promoter and participate in its transcriptional activation. In astrocytes and osteoblasts, upon DNA damage, inhibits cell-cycle progression after G2/M phase by binding to promoters and activating transcription of genes encoding cell-cycle inhibitors, such as p21/CDKN1A. Required for TGFB1 to activate genes involved in the assembly of collagen extracellular matrix. The protein is Cyclic AMP-responsive element-binding protein 3-like protein 1 (Creb3l1) of Mus musculus (Mouse).